The chain runs to 292 residues: NAD kinase (292 aa).

The active-site Proton acceptor is aspartate 73. NAD(+)-binding positions include 73–74 (DG), 147–148 (NE), histidine 158, arginine 175, aspartate 177, 188–193 (TAYSLS), and glutamine 247.

Belongs to the NAD kinase family. A divalent metal cation is required as a cofactor.

Its subcellular location is the cytoplasm. It carries out the reaction NAD(+) + ATP = ADP + NADP(+) + H(+). Its function is as follows. Involved in the regulation of the intracellular balance of NAD and NADP, and is a key enzyme in the biosynthesis of NADP. Catalyzes specifically the phosphorylation on 2'-hydroxyl of the adenosine moiety of NAD to yield NADP. The polypeptide is NAD kinase (Salmonella agona (strain SL483)).